The chain runs to 851 residues: M-phase phosphoprotein 8 (851 aa).

The segment at 21-54 is disordered; it reads NIGRSPEVEGGGAAGEEKDAATKGTVAVGDSEED. 3 positions are modified to phosphoserine: Ser51, Ser85, and Ser136. The 60-residue stretch at 59–118 folds into the Chromo domain; sequence FEVERILDMKCEGGKNLYKVRWKGYTSDDDTWEPEVHLEDCKEVLLEFRKKVAENKAKAV. A histone H3K9me3 binding region spans residues 80 to 87; it reads WKGYTSDD. The interval 133 to 174 is disordered; sequence EADSDIDQQGDTKEDTSPRKKKKKIKYKEDKSPDDLRKKRAK. The residue at position 144 (Thr144) is a Phosphothreonine. Phosphoserine; by CDK1 is present on residues Ser149 and Ser164. Over residues 159 to 169 the composition is skewed to basic and acidic residues; it reads YKEDKSPDDLR. 4 positions are modified to phosphoserine: Ser188, Ser263, Ser267, and Ser274. The segment at 240–302 is disordered; the sequence is REDVKDNRKT…KTGQDTVQES (63 aa). A compositionally biased stretch (acidic residues) spans 269–278; the sequence is TLEDESEDFL. Positions 279 to 295 are enriched in basic and acidic residues; that stretch reads SDNKEKQNVRTAKDKTG. Ser313 carries the phosphoserine modification. The disordered stretch occupies residues 315-428; the sequence is EEAGTRVRRK…DKEEKARKEP (114 aa). Residues 329–364 are compositionally biased toward basic and acidic residues; sequence RKFEEPKEIKKLENTNNFLERKMIPKKQRNQDKGRS. A Phosphothreonine; by CDK1 modification is found at Thr379. Phosphoserine occurs at positions 386 and 394. The segment covering 401–428 has biased composition (basic and acidic residues); the sequence is EKERKNEPKEKYQKRYDFDKEEKARKEP. A Phosphothreonine modification is found at Thr447. ANK repeat units follow at residues 591–620, 624–653, 657–686, and 690–719; these read TGMT…KVNG, NGTT…FVNV, NGET…DCNI, and HQNS…TLSR.

Homodimer. Interacts (via chromo domain) with histone H3K9me3. Has the highest affinity for H3K9me3, and lesser affinity for H3K9me2 and H3K9me1. Component of the HUSH complex; at least composed of TASOR, PPHLN1 and MPHOSPH8. Interacts with DNMT3, EHMT1 and SETDB1. Interacts with MORC2; the interaction associateS MORC2 with the HUSH complex which recruits MORC2 to heterochromatic loci. Interacts with ZNF638; leading to recruitment of the HUSH complex to unintegrated retroviral DNA. Interacts with TASOR. Post-translationally, phosphorylated in M (mitotic) phase. Phosphorylation by CDK1 promotes dissociation from chromatin.

It is found in the nucleus. It localises to the chromosome. In terms of biological role, heterochromatin component that specifically recognizes and binds methylated 'Lys-9' of histone H3 (H3K9me) and promotes recruitment of proteins that mediate epigenetic repression. Mediates recruitment of the HUSH complex to H3K9me3 sites: the HUSH complex is recruited to genomic loci rich in H3K9me3 and is required to maintain transcriptional silencing by promoting recruitment of SETDB1, a histone methyltransferase that mediates further deposition of H3K9me3, as well as MORC2. Binds H3K9me and promotes DNA methylation by recruiting DNMT3A to target CpG sites; these can be situated within the coding region of the gene. Mediates down-regulation of CDH1 expression. Also represses L1 retrotransposons in collaboration with MORC2 and, probably, SETDB1, the silencing is dependent of repressive epigenetic modifications, such as H3K9me3 mark. Silencing events often occur within introns of transcriptionally active genes, and lead to the down-regulation of host gene expression. The HUSH complex is also involved in the silencing of unintegrated retroviral DNA by being recruited by ZNF638: some part of the retroviral DNA formed immediately after infection remains unintegrated in the host genome and is transcriptionally repressed. The sequence is that of M-phase phosphoprotein 8 from Rattus norvegicus (Rat).